We begin with the raw amino-acid sequence, 145 residues long: uncharacterized protein (145 aa).

The tract at residues 62 to 145 is disordered; it reads LPSVGGRMTA…QLPQQGGCPG (84 aa). Residues 84–95 are compositionally biased toward pro residues; it reads ASSPEDPPLPHP.

This is an uncharacterized protein from Homo sapiens (Human).